Consider the following 250-residue polypeptide: 5'-nucleotidase SurE (250 aa).

Asp8, Asp9, Ser39, and Asn91 together coordinate a divalent metal cation.

It belongs to the SurE nucleotidase family. A divalent metal cation is required as a cofactor.

It is found in the cytoplasm. The enzyme catalyses a ribonucleoside 5'-phosphate + H2O = a ribonucleoside + phosphate. In terms of biological role, nucleotidase that shows phosphatase activity on nucleoside 5'-monophosphates. The protein is 5'-nucleotidase SurE of Leptospira borgpetersenii serovar Hardjo-bovis (strain JB197).